Reading from the N-terminus, the 168-residue chain is Phosphopantetheine adenylyltransferase (168 aa).

Serine 8 provides a ligand contact to substrate. ATP contacts are provided by residues 8 to 9 (SF) and histidine 16. Substrate is bound by residues lysine 40, alanine 72, and arginine 86. Residues 87–89 (GLR), glutamate 97, and 122–128 (YSFLSSS) each bind ATP.

This sequence belongs to the bacterial CoaD family. Homohexamer. It depends on Mg(2+) as a cofactor.

It is found in the cytoplasm. The catalysed reaction is (R)-4'-phosphopantetheine + ATP + H(+) = 3'-dephospho-CoA + diphosphate. The protein operates within cofactor biosynthesis; coenzyme A biosynthesis; CoA from (R)-pantothenate: step 4/5. Functionally, reversibly transfers an adenylyl group from ATP to 4'-phosphopantetheine, yielding dephospho-CoA (dPCoA) and pyrophosphate. The protein is Phosphopantetheine adenylyltransferase of Trichodesmium erythraeum (strain IMS101).